A 478-amino-acid chain; its full sequence is ATP synthase subunit beta (478 aa).

163–170 (GGAGVGKT) provides a ligand contact to ATP.

It belongs to the ATPase alpha/beta chains family. F-type ATPases have 2 components, CF(1) - the catalytic core - and CF(0) - the membrane proton channel. CF(1) has five subunits: alpha(3), beta(3), gamma(1), delta(1), epsilon(1). CF(0) has three main subunits: a(1), b(2) and c(9-12). The alpha and beta chains form an alternating ring which encloses part of the gamma chain. CF(1) is attached to CF(0) by a central stalk formed by the gamma and epsilon chains, while a peripheral stalk is formed by the delta and b chains.

Its subcellular location is the cell inner membrane. The catalysed reaction is ATP + H2O + 4 H(+)(in) = ADP + phosphate + 5 H(+)(out). Produces ATP from ADP in the presence of a proton gradient across the membrane. The catalytic sites are hosted primarily by the beta subunits. The chain is ATP synthase subunit beta from Aquifex pyrophilus.